Here is a 238-residue protein sequence, read N- to C-terminus: Survival of motor neuron-related-splicing factor 30 (238 aa).

In terms of domain architecture, Tudor spans 72-132 (SWKVGDKCMA…KPVEEGRKAK (61 aa)). A Nuclear localization signal motif is present at residues 142-160 (KKEMIAQQREYKKKKALKK). S201 carries the post-translational modification Phosphoserine. N6-acetyllysine is present on K219.

It belongs to the SMN family. Associates with spliceosomes. Associates with U4/U5/U6 tri-snRNP and with U2 snRNP.

The protein resides in the nucleus speckle. The protein localises to the nucleus. It localises to the cajal body. Its function is as follows. Involved in spliceosome assembly. This chain is Survival of motor neuron-related-splicing factor 30 (SMNDC1), found in Pongo abelii (Sumatran orangutan).